We begin with the raw amino-acid sequence, 486 residues long: Cardiolipin synthase A (486 aa).

The next 2 membrane-spanning stretches (helical) occupy residues 3–23 (TFYT…IAGV) and 38–58 (MAWL…YLSF). 2 PLD phosphodiesterase domains span residues 219-246 (MDLR…VDPR) and 399-426 (EGGL…DMRS). Residues His-224, Lys-226, Asp-231, His-404, Lys-406, and Asp-411 contribute to the active site.

This sequence belongs to the phospholipase D family. Cardiolipin synthase subfamily. ClsA sub-subfamily.

It localises to the cell inner membrane. It carries out the reaction 2 a 1,2-diacyl-sn-glycero-3-phospho-(1'-sn-glycerol) = a cardiolipin + glycerol. Functionally, catalyzes the reversible phosphatidyl group transfer from one phosphatidylglycerol molecule to another to form cardiolipin (CL) (diphosphatidylglycerol) and glycerol. This is Cardiolipin synthase A from Yersinia pseudotuberculosis serotype IB (strain PB1/+).